Consider the following 512-residue polypeptide: Anaerobic nitric oxide reductase transcription regulator NorR (512 aa).

The Sigma-54 factor interaction domain maps to 190-419; the sequence is MIGESLAMQE…LEHVISRAAV (230 aa). ATP-binding positions include 218-225 and 281-290; these read GETGVGKE and ADNGTLFLDE. A DNA-binding region (H-T-H motif) is located at residues 487–506; that stretch reads WAATARALQLDTGNLHRLAK.

It functions in the pathway nitrogen metabolism; nitric oxide reduction. In terms of biological role, required for the expression of anaerobic nitric oxide (NO) reductase, acts as a transcriptional activator for at least the norVW operon. Activation also requires sigma-54. This Aliivibrio fischeri (strain ATCC 700601 / ES114) (Vibrio fischeri) protein is Anaerobic nitric oxide reductase transcription regulator NorR.